Here is a 286-residue protein sequence, read N- to C-terminus: Phycobilisome 32.1 kDa linker polypeptide, phycocyanin-associated, rod (286 aa).

The region spanning 2-180 (AITAAASRLG…LYRGYANSDR (179 aa)) is the PBS-linker domain. Residues 234–286 (DRVYRIEVTGVRSPGYPSVRRSSYAIIVPYERLSEKIQQIHKLGGKIVSITSA) enclose the CpcD-like domain.

This sequence belongs to the phycobilisome linker protein family.

It is found in the cellular thylakoid membrane. In terms of biological role, rod linker protein, associated with phycocyanin. Linker polypeptides determine the state of aggregation and the location of the disk-shaped phycobiliprotein units within the phycobilisome and modulate their spectroscopic properties in order to mediate a directed and optimal energy transfer. This chain is Phycobilisome 32.1 kDa linker polypeptide, phycocyanin-associated, rod (cpcC), found in Mastigocladus laminosus (Fischerella sp.).